A 784-amino-acid chain; its full sequence is Ent-kaurene synthase 1, chloroplastic (784 aa).

A chloroplast-targeting transit peptide spans 1 to 28; that stretch reads MNLSLCIASPLLTKSSRPTALSAIHTAS. Mg(2+)-binding residues include aspartate 528, aspartate 532, asparagine 672, and glutamate 680. The short motif at 528 to 532 is the DDXXD motif element; it reads DDFFD.

Belongs to the terpene synthase family. It depends on Mg(2+) as a cofactor. As to expression, accumulates in leaves.

The protein localises to the plastid. It is found in the chloroplast. It carries out the reaction ent-copalyl diphosphate = ent-kaur-16-ene + diphosphate. The protein operates within secondary metabolite biosynthesis; terpenoid biosynthesis. It participates in plant hormone biosynthesis; gibberellin biosynthesis. Its function is as follows. Involved in the biosynthesis of ent-kaurene diterpenoids natural products such as oridonin, miltiradiene, eriocalyxin B and nezukol, known to exhibit antitumor, anti-inflammatory and antibacterial activities, and in the production of gibberellins phytohormones. Catalyzes the conversion of ent-copalyl diphosphate (ent-CPP) to ent-kaurene. This is Ent-kaurene synthase 1, chloroplastic from Stevia rebaudiana (Stevia).